The following is a 519-amino-acid chain: Protein nucleotidyltransferase YdiU (519 aa).

ATP contacts are provided by Gly101, Gly103, Arg104, Lys124, Asp136, Gly137, Arg194, and Arg201. Asp271 serves as the catalytic Proton acceptor. Residues Asn272 and Asp281 each coordinate Mg(2+). Residue Asp281 participates in ATP binding.

Belongs to the SELO family. The cofactor is Mg(2+). Mn(2+) serves as cofactor.

It carries out the reaction L-seryl-[protein] + ATP = 3-O-(5'-adenylyl)-L-seryl-[protein] + diphosphate. The enzyme catalyses L-threonyl-[protein] + ATP = 3-O-(5'-adenylyl)-L-threonyl-[protein] + diphosphate. The catalysed reaction is L-tyrosyl-[protein] + ATP = O-(5'-adenylyl)-L-tyrosyl-[protein] + diphosphate. It catalyses the reaction L-histidyl-[protein] + UTP = N(tele)-(5'-uridylyl)-L-histidyl-[protein] + diphosphate. It carries out the reaction L-seryl-[protein] + UTP = O-(5'-uridylyl)-L-seryl-[protein] + diphosphate. The enzyme catalyses L-tyrosyl-[protein] + UTP = O-(5'-uridylyl)-L-tyrosyl-[protein] + diphosphate. Functionally, nucleotidyltransferase involved in the post-translational modification of proteins. It can catalyze the addition of adenosine monophosphate (AMP) or uridine monophosphate (UMP) to a protein, resulting in modifications known as AMPylation and UMPylation. The chain is Protein nucleotidyltransferase YdiU from Azoarcus sp. (strain BH72).